The sequence spans 282 residues: Elongation factor Ts (282 aa).

Positions 80–83 are involved in Mg(2+) ion dislocation from EF-Tu; the sequence is TDFV.

This sequence belongs to the EF-Ts family.

It localises to the cytoplasm. Its function is as follows. Associates with the EF-Tu.GDP complex and induces the exchange of GDP to GTP. It remains bound to the aminoacyl-tRNA.EF-Tu.GTP complex up to the GTP hydrolysis stage on the ribosome. This Chlamydia trachomatis serovar D (strain ATCC VR-885 / DSM 19411 / UW-3/Cx) protein is Elongation factor Ts (tsf).